The primary structure comprises 367 residues: MWGSRAQQSGPDRGGACLLAAFLLCFSLLHAQDYTPSQTPPPTSNTSLKPRGRVQKELCGKTKFQGKIYGGQIAKAERWPWQASLIFRGRHICGAVLIDKTWLLSAAHCFQRSLTPSDYRILLGYNQLSNPSNYSRQMTVNKVILHEDYSKLSRLEKNIVLIQLHHPVIYSTHIFPACVPDGTTKVSPNNLCWISGWGMLSADKFLQAPFPLLDAEVSLIDEEECTTFFQTPEVSITEYDVIKDDVLCAGDLTNQKSSCRGDSGGPLVCFLNSFWYVVGLANWNGACLEPIHSPNIFTKVSYFSDWIKQKKANTPAADVSSAPLEEMASSLRGWGNYSAGITLKPRISTTLLSSQALLLQSIWLRIL.

Residues 1-31 (MWGSRAQQSGPDRGGACLLAAFLLCFSLLHA) form the signal peptide. Residues 68 to 312 (IYGGQIAKAE…FSDWIKQKKA (245 aa)) enclose the Peptidase S1 domain. 4 disulfide bridges follow: C93-C109, C192-C269, C225-C248, and C259-C287.

It belongs to the peptidase S1 family. As to expression, expressed in testis. More specifically, abundantly expressed in the haploid round spermatid.

Its subcellular location is the cytoplasmic vesicle. It is found in the secretory vesicle. The protein localises to the acrosome. It localises to the secreted. Functionally, may play an important role in the sperm/egg interaction; released during the acrosome reaction. The polypeptide is Inactive serine protease 39 (Prss39) (Mus musculus (Mouse)).